The chain runs to 516 residues: Cilia- and flagella-associated protein 53 (516 aa).

2 coiled-coil regions span residues 217–283 (EEKK…LQVK) and 316–440 (MQGY…RQMK). Composition is skewed to basic and acidic residues over residues 417–436 (KELLESATEEHKQLETDRNA) and 461–472 (QAEREEEQREFE). 2 disordered regions span residues 417 to 443 (KELLESATEEHKQLETDRNARQMKVAQ) and 455 to 475 (YQQSQRQAEREEEQREFEAGL).

The protein belongs to the CFAP53 family.

Its subcellular location is the cytoplasm. The protein localises to the cytoskeleton. The protein resides in the cilium axoneme. It is found in the microtubule organizing center. It localises to the centrosome. Its subcellular location is the centriolar satellite. Its function is as follows. Microtubule inner protein (MIP) part of the dynein-decorated doublet microtubules (DMTs) in cilia axoneme, which is required for motile cilia beating. Regulates motility patterns of both 9+0 and 9+2 motile cilia through differential localization and recruitment of axonemal dynein components. Required for motile cilium formation and movement. Involved in the establishment of left-right symmetry during embryogenesis. In Xenopus laevis (African clawed frog), this protein is Cilia- and flagella-associated protein 53.